The sequence spans 98 residues: Acylphosphatase (98 aa).

Residues 12-98 (TYYVRVRGVV…EKRFERFQQQ (87 aa)) enclose the Acylphosphatase-like domain. Active-site residues include Arg-27 and Asn-45.

Belongs to the acylphosphatase family.

It catalyses the reaction an acyl phosphate + H2O = a carboxylate + phosphate + H(+). The protein is Acylphosphatase (acyP) of Burkholderia cenocepacia (strain HI2424).